The sequence spans 213 residues: ER lumen protein-retaining receptor erd-2.1 (213 aa).

Over 1–2 (MN) the chain is Lumenal. A helical transmembrane segment spans residues 3–21 (LFRFTADVAHAIAIVVLLL). Topologically, residues 22–35 (KIWKSRSCEGISGR) are cytoplasmic. Residues 36–53 (SQLLFALVFVTRYLDLFT) traverse the membrane as a helical segment. Residues 54–61 (NFFSFYNT) are Lumenal-facing. The chain crosses the membrane as a helical span at residues 62-80 (AMKIFYLVASFGTVYLMWA). Residues 81-96 (KFKATYDRNNDSFRIE) lie on the Cytoplasmic side of the membrane. The helical transmembrane segment at 97-110 (FLVIPSMILALLIN) threads the bilayer. The Lumenal segment spans residues 111-117 (HEFIFME). A helical transmembrane segment spans residues 118–137 (VMWTFSIYLEAVAIMPQLFM). The Cytoplasmic portion of the chain corresponds to 138-149 (LSRTGNAETITA). A helical transmembrane segment spans residues 150–168 (HYLFALGSYRFLYILNWVY). Residues 169–178 (RYYTESFFDP) lie on the Lumenal side of the membrane. Residues 179–199 (ISVVAGIVQTVLYADFFYLYI) traverse the membrane as a helical segment. Over 200-213 (TRVIQSNRQFEMSA) the chain is Cytoplasmic.

This sequence belongs to the ERD2 family.

Its subcellular location is the endoplasmic reticulum membrane. Its function is as follows. Required for the retention of luminal endoplasmic reticulum proteins. Determines the specificity of the luminal ER protein retention system. Also required for normal vesicular traffic through the Golgi. This is ER lumen protein-retaining receptor erd-2.1 from Caenorhabditis elegans.